The primary structure comprises 130 residues: ATP synthase epsilon chain (130 aa).

It belongs to the ATPase epsilon chain family. F-type ATPases have 2 components, CF(1) - the catalytic core - and CF(0) - the membrane proton channel. CF(1) has five subunits: alpha(3), beta(3), gamma(1), delta(1), epsilon(1). CF(0) has three main subunits: a, b and c.

It is found in the cell membrane. Its function is as follows. Produces ATP from ADP in the presence of a proton gradient across the membrane. The polypeptide is ATP synthase epsilon chain (Nocardia farcinica (strain IFM 10152)).